Reading from the N-terminus, the 1233-residue chain is Glutamate receptor ionotropic, NMDA 2C (1233 aa).

The N-terminal stretch at 1 to 19 (MGGALGPALLLTSLFGAWA) is a signal peptide. At 20 to 554 (GLGPGQGEQG…SAFLEPYSPA (535 aa)) the chain is on the extracellular side. Asn70 and Asn73 each carry an N-linked (GlcNAc...) asparagine glycan. Cys82 and Cys317 form a disulfide bridge. N-linked (GlcNAc...) asparagine glycans are attached at residues Asn337 and Asn438. 2 cysteine pairs are disulfide-bonded: Cys426-Cys453 and Cys433-Cys454. L-glutamate contacts are provided by Ser509, Thr511, and Arg516. Residue Asn539 is glycosylated (N-linked (GlcNAc...) asparagine). The helical transmembrane segment at 555–575 (VWVMMFVMCLTVVAITVFMFE) threads the bilayer. Over 576–598 (YFSPVSYNQNLTRGKKSGGPAFT) the chain is Cytoplasmic. The discontinuously helical intramembrane region spans 599 to 611 (IGKSVWLLWALVF). Residues 601 to 620 (KSVWLLWALVFNNSVPIENP) are pore-forming. Topologically, residues 612 to 626 (NNSVPIENPRGTTSK) are cytoplasmic. Residues 627 to 644 (IMVLVWAFFAVIFLASYT) traverse the membrane as a helical segment. Residues 645–813 (ANLAAFMIQE…EVMSSKLDID (169 aa)) lie on the Extracellular side of the membrane. Asn685 is a glycosylation site (N-linked (GlcNAc...) asparagine). Ser687, Thr688, and Asp729 together coordinate L-glutamate. Cys743 and Cys798 are joined by a disulfide. A helical transmembrane segment spans residues 814–836 (NMAGVFYMLLVAMGLALLVFAWE). Residues 837–1233 (HLVYWKLRHS…RRISSLESEV (397 aa)) lie on the Cytoplasmic side of the membrane. 3 positions are modified to phosphoserine: Ser875, Ser881, and Ser912. Residues 920–994 (IENWGGGRRA…GPPLSDVSRV (75 aa)) form a disordered region. Pro residues-rich tracts occupy residues 929-956 (APPPSPCPTPRSGPSPCLPTPDPPPEPS) and 975-987 (PQPPGRPPTPGPP). Residues 1231-1233 (SEV) carry the PDZ-binding motif.

Belongs to the glutamate-gated ion channel (TC 1.A.10.1) family. NR2C/GRIN2C subfamily. Heterotetramer. Forms heterotetrameric channels composed of two GluN1/zeta subunits (GRIN1), and two identical GluN2/epsilon subunits (GRIN2A, GRIN2B, GRIN2C or GRIN2D) or GluN3 subunits (GRIN3A or GRIN3B) (in vitro). In vivo, the subunit composition may depend on the expression levels of the different subunits. Interacts with PDZ domains of PATJ and DLG4. Interacts (via PDZ-binding motif) with SNX27 (via PDZ domain); the interaction is required for recycling to the plasma membrane when endocytosed and prevent degradation in lysosomes. As to expression, mainly expressed in brain with predominant expression is in the cerebellum, also present in the hippocampus, amygdala, caudate nucleus, corpus callosum, subthalamic nuclei and thalamus. Detected in the heart, skeletal muscle and pancreas.

Its subcellular location is the cell membrane. The protein resides in the postsynaptic cell membrane. It carries out the reaction Ca(2+)(in) = Ca(2+)(out). It catalyses the reaction Na(+)(in) = Na(+)(out). The catalysed reaction is K(+)(in) = K(+)(out). Functionally, component of N-methyl-D-aspartate (NMDA) receptors (NMDARs) that function as heterotetrameric, ligand-gated cation channels with high calcium permeability and voltage-dependent block by Mg(2+). Participates in synaptic plasticity for learning and memory formation by contributing to the slow phase of excitatory postsynaptic current and long-term synaptic potentiation. Channel activation requires binding of the neurotransmitter L-glutamate to the GluN2 subunit, glycine or D-serine binding to the GluN1 subunit, plus membrane depolarization to eliminate channel inhibition by Mg(2+). NMDARs mediate simultaneously the potasium efflux and the influx of calcium and sodium. Each GluN2 subunit confers differential attributes to channel properties, including activation, deactivation and desensitization kinetics, pH sensitivity, Ca2(+) permeability, and binding to allosteric modulators. This chain is Glutamate receptor ionotropic, NMDA 2C, found in Homo sapiens (Human).